Consider the following 168-residue polypeptide: Photosystem I assembly protein Ycf3 (168 aa).

TPR repeat units lie at residues 35–68 (AFTY…EIDP), 72–105 (SYIL…NSFL), and 120–153 (GEQA…TPGN).

It belongs to the Ycf3 family.

The protein resides in the plastid. It localises to the chloroplast thylakoid membrane. Functionally, essential for the assembly of the photosystem I (PSI) complex. May act as a chaperone-like factor to guide the assembly of the PSI subunits. The polypeptide is Photosystem I assembly protein Ycf3 (Jasminum nudiflorum (Winter jasmine)).